Consider the following 281-residue polypeptide: Acetyl-coenzyme A carboxylase carboxyl transferase subunit beta (281 aa).

In terms of domain architecture, CoA carboxyltransferase N-terminal spans 23-281; sequence LWSKCEDCGA…KTLAMMRVEG (259 aa). C27, C30, C46, and C49 together coordinate Zn(2+). The C4-type zinc-finger motif lies at 27 to 49; the sequence is CEDCGAMLHRRQLEENLNTCNEC.

This sequence belongs to the AccD/PCCB family. In terms of assembly, acetyl-CoA carboxylase is a heterohexamer composed of biotin carboxyl carrier protein (AccB), biotin carboxylase (AccC) and two subunits each of ACCase subunit alpha (AccA) and ACCase subunit beta (AccD). Zn(2+) serves as cofactor.

It localises to the cytoplasm. The enzyme catalyses N(6)-carboxybiotinyl-L-lysyl-[protein] + acetyl-CoA = N(6)-biotinyl-L-lysyl-[protein] + malonyl-CoA. The protein operates within lipid metabolism; malonyl-CoA biosynthesis; malonyl-CoA from acetyl-CoA: step 1/1. In terms of biological role, component of the acetyl coenzyme A carboxylase (ACC) complex. Biotin carboxylase (BC) catalyzes the carboxylation of biotin on its carrier protein (BCCP) and then the CO(2) group is transferred by the transcarboxylase to acetyl-CoA to form malonyl-CoA. The sequence is that of Acetyl-coenzyme A carboxylase carboxyl transferase subunit beta from Chlorobium luteolum (strain DSM 273 / BCRC 81028 / 2530) (Pelodictyon luteolum).